The primary structure comprises 251 residues: MARRTKIYEGKAKILYEGPEPGTIVQYFKDDATAFNAQKKDVIEGKGVLNNRLSEYFMTGLAQIGVPTHFIRRLNMREQLVRACEIVPLEVIVRNFAAGTMSKRLGIEEGTQLPRPIVEYCLKNDELGDPLVTEEHIAAFGWASQQDMDDILSLALRVNDYLSGLMYGVGIKLVDFKIEIGRVYENDYPRLIIADEISPDSCRLWDIATGQKLDKDVFRRDLGSLTDAYSEVARRLGVIPKTQIAKPTLIN.

This sequence belongs to the SAICAR synthetase family.

The enzyme catalyses 5-amino-1-(5-phospho-D-ribosyl)imidazole-4-carboxylate + L-aspartate + ATP = (2S)-2-[5-amino-1-(5-phospho-beta-D-ribosyl)imidazole-4-carboxamido]succinate + ADP + phosphate + 2 H(+). Its pathway is purine metabolism; IMP biosynthesis via de novo pathway; 5-amino-1-(5-phospho-D-ribosyl)imidazole-4-carboxamide from 5-amino-1-(5-phospho-D-ribosyl)imidazole-4-carboxylate: step 1/2. The protein is Phosphoribosylaminoimidazole-succinocarboxamide synthase of Ruegeria pomeroyi (strain ATCC 700808 / DSM 15171 / DSS-3) (Silicibacter pomeroyi).